Here is a 342-residue protein sequence, read N- to C-terminus: Cathepsin B-like cysteine proteinase 1 (342 aa).

Residues 1–18 form the signal peptide; it reads MKYLVLALCTYLCSQTGA. A propeptide spans 19 to 86 (activation peptide); that stretch reads DENAAQGIPL…VKEDPDPEVD (68 aa). N-linked (GlcNAc...) asparagine glycosylation occurs at asparagine 99. Cystine bridges form between cysteine 100/cysteine 128, cysteine 111/cysteine 156, cysteine 147/cysteine 214, cysteine 148/cysteine 152, cysteine 185/cysteine 218, and cysteine 193/cysteine 205. Residue cysteine 114 is part of the active site. N-linked (GlcNAc...) asparagine glycosylation occurs at asparagine 138. Asparagine 198 is a glycosylation site (N-linked (GlcNAc...) asparagine). The active site involves histidine 285. A glycan (N-linked (GlcNAc...) asparagine) is linked at asparagine 296. Asparagine 305 is an active-site residue.

This sequence belongs to the peptidase C1 family.

In terms of biological role, expression of the protease correlates with blood-feeding and suggests a role for the protease in blood digestion. The chain is Cathepsin B-like cysteine proteinase 1 (AC-1) from Haemonchus contortus (Barber pole worm).